The chain runs to 374 residues: Glutamate 5-kinase (374 aa).

Lys-16 serves as a coordination point for ATP. Residues Ser-56, Asp-143, and Asn-155 each coordinate substrate. Position 175 to 176 (175 to 176 (TD)) interacts with ATP. The PUA domain maps to 282–360 (KGCFVVDEGA…TRIEEILGYV (79 aa)).

Belongs to the glutamate 5-kinase family.

The protein resides in the cytoplasm. It catalyses the reaction L-glutamate + ATP = L-glutamyl 5-phosphate + ADP. It functions in the pathway amino-acid biosynthesis; L-proline biosynthesis; L-glutamate 5-semialdehyde from L-glutamate: step 1/2. Functionally, catalyzes the transfer of a phosphate group to glutamate to form L-glutamate 5-phosphate. The sequence is that of Glutamate 5-kinase from Methylococcus capsulatus (strain ATCC 33009 / NCIMB 11132 / Bath).